The sequence spans 351 residues: D-alanine--D-alanine ligase (351 aa).

Residues 135-343 (NQIFLQSGQK…MEEVFSDLIE (209 aa)) form the ATP-grasp domain. Position 167-222 (167-222 (LETLGFPQFLKPVEGGSSVSVYKITNREQLKEKLALIFESDSKVMSQSFLTGIEVS)) interacts with ATP. The Mg(2+) site is built by aspartate 298, glutamate 310, and asparagine 312.

It belongs to the D-alanine--D-alanine ligase family. Mg(2+) is required as a cofactor. Mn(2+) serves as cofactor.

The protein localises to the cytoplasm. It catalyses the reaction 2 D-alanine + ATP = D-alanyl-D-alanine + ADP + phosphate + H(+). It functions in the pathway cell wall biogenesis; peptidoglycan biosynthesis. Functionally, cell wall formation. The chain is D-alanine--D-alanine ligase from Leptospira interrogans serogroup Icterohaemorrhagiae serovar copenhageni (strain Fiocruz L1-130).